Here is a 364-residue protein sequence, read N- to C-terminus: DNA polymerase IV (364 aa).

The 185-residue stretch at 14–198 (IIHIDMDAFF…LPIEKFHGVG (185 aa)) folds into the UmuC domain. Mg(2+) contacts are provided by D18 and D116. E117 is a catalytic residue.

This sequence belongs to the DNA polymerase type-Y family. As to quaternary structure, monomer. Mg(2+) is required as a cofactor.

The protein resides in the cytoplasm. The enzyme catalyses DNA(n) + a 2'-deoxyribonucleoside 5'-triphosphate = DNA(n+1) + diphosphate. In terms of biological role, poorly processive, error-prone DNA polymerase involved in untargeted mutagenesis. Copies undamaged DNA at stalled replication forks, which arise in vivo from mismatched or misaligned primer ends. These misaligned primers can be extended by PolIV. Exhibits no 3'-5' exonuclease (proofreading) activity. May be involved in translesional synthesis, in conjunction with the beta clamp from PolIII. The chain is DNA polymerase IV from Streptococcus pyogenes serotype M28 (strain MGAS6180).